Consider the following 1185-residue polypeptide: Zinc finger SWIM domain-containing protein 5 (1185 aa).

The span at 1–10 (MADGGEREEL) shows a compositional bias: basic and acidic residues. 2 disordered regions span residues 1–45 (MADG…GGAG) and 123–153 (AGAA…GSAP). An SWIM-type zinc finger spans residues 219 to 256 (YKVAISFDRCKITSVTCGCGNKDIFYCAHVVALSLYRI).

This chain is Zinc finger SWIM domain-containing protein 5 (ZSWIM5), found in Homo sapiens (Human).